A 90-amino-acid polypeptide reads, in one-letter code: Small ribosomal subunit protein uS15 (90 aa).

This sequence belongs to the universal ribosomal protein uS15 family. Part of the 30S ribosomal subunit. Forms a bridge to the 50S subunit in the 70S ribosome, contacting the 23S rRNA.

In terms of biological role, one of the primary rRNA binding proteins, it binds directly to 16S rRNA where it helps nucleate assembly of the platform of the 30S subunit by binding and bridging several RNA helices of the 16S rRNA. Forms an intersubunit bridge (bridge B4) with the 23S rRNA of the 50S subunit in the ribosome. The polypeptide is Small ribosomal subunit protein uS15 (Blochmanniella floridana).